Consider the following 167-residue polypeptide: SAR-endolysin (167 aa).

A helical; Signal-anchor for type II membrane protein transmembrane segment spans residues 11-31 (VIAAISGGAIAIASVLITGPG). Catalysis depends on proton donor/acceptor residues Glu37 and Asp46.

This sequence belongs to the glycosyl hydrolase 24 family.

The protein resides in the host cell inner membrane. The catalysed reaction is Hydrolysis of (1-&gt;4)-beta-linkages between N-acetylmuramic acid and N-acetyl-D-glucosamine residues in a peptidoglycan and between N-acetyl-D-glucosamine residues in chitodextrins.. Its function is as follows. Signal-arrest-release (SAR) endolysin with lysozyme activity that degrades host peptidoglycans and participates with the pinholin and spanin proteins in the sequential events which lead to programmed host cell lysis releasing the mature viral particles. Once the pinholin has permeabilized the host cell membrane, the SAR-endolysin is released into the periplasm where it breaks down the peptidoglycan layer. The sequence is that of SAR-endolysin (19) from Bacteriophage PS34.